A 42-amino-acid chain; its full sequence is Envelope protein P10 (42 aa).

Residues Thr20 to Leu40 traverse the membrane as a helical segment.

It localises to the virion membrane. Functionally, involved in cell lysis. This is Envelope protein P10 (P10) from Pseudomonas savastanoi pv. phaseolicola (Pseudomonas syringae pv. phaseolicola).